Consider the following 438-residue polypeptide: MPKIVVVGAVAGGATCASQIRRLDKESDIIIFEKDRDMSFANCALPYVIGEVVEDRKYALAYTPEKFYDRKQITVKTYHEVIAINDERQTVTVLNRKTNEQFEESYDKLILSPGASANSLGFESDITFTLRNLEDTDAIDQFIKANQVDKVLVVGAGYVSLEVLENLYERGLHPTLIHRSDKINKLMDADMNQPILDELDKREIPYRLNEEIDAINGNEITFKSGKVEHYDMIIEGVGTHPNSKFIESSNIKLDRKGFIPVNDKFETNVPNIYAIGDIATSHYRHVDLPASVPLAWGAHRAASIVAEQIAGNDTIEFKGFLGNNIVKFFDYTFASVGVKPNELKQFDYKMVEVTQGAHANYYPGNSPLHLRVYYDTSNRQILRAAAVGKEGADKRIDVLSMAMMNQLTVDELTEFEVAYAPPYSHPKDLINMIGYKAK.

FAD is bound at residue 8–33 (GAVAGGATCASQIRRLDKESDIIIFE). T15, Q19, R22, S39, and N42 together coordinate substrate. Residue C43 is the Nucleophile of the active site. C43 acts as the Redox-active in catalysis. Substrate is bound at residue K71. 151 to 166 (VLVVGAGYVSLEVLEN) provides a ligand contact to NADP(+). An FAD-binding site is contributed by 267–277 (TNVPNIYAIGD). H299 is a binding site for substrate. Y419 contributes to the FAD binding site. K427 serves as a coordination point for substrate.

Belongs to the class-III pyridine nucleotide-disulfide oxidoreductase family. As to quaternary structure, homodimer. It depends on FAD as a cofactor.

The catalysed reaction is NADP(+) + 2 CoA = CoA-disulfide + NADPH + H(+). Its function is as follows. Catalyzes specifically the NADPH-dependent reduction of coenzyme A disulfide. This Staphylococcus aureus (strain MSSA476) protein is Coenzyme A disulfide reductase.